The following is a 326-amino-acid chain: Putative ABC transporter ATP-binding protein MPN_334 (326 aa).

One can recognise an ABC transporter domain in the interval 7 to 239 (VEVKHLEKEF…NFGYRLKVNN (233 aa)). Position 42 to 49 (42 to 49 (GQNGAGKT)) interacts with ATP.

Belongs to the ABC transporter superfamily.

This Mycoplasma pneumoniae (strain ATCC 29342 / M129 / Subtype 1) (Mycoplasmoides pneumoniae) protein is Putative ABC transporter ATP-binding protein MPN_334.